The chain runs to 576 residues: Lipoprotein LpqB (576 aa).

A signal peptide spans 1-16; sequence MRRVTRTIAAAGAAIA. Residue Cys17 is the site of N-palmitoyl cysteine attachment. A lipid anchor (S-diacylglycerol cysteine) is attached at Cys17.

The protein belongs to the LpqB lipoprotein family.

Its subcellular location is the cell membrane. This chain is Lipoprotein LpqB, found in Bifidobacterium longum (strain NCC 2705).